The primary structure comprises 883 residues: Alanine--tRNA ligase (883 aa).

Histidine 564, histidine 568, cysteine 666, and histidine 670 together coordinate Zn(2+).

Belongs to the class-II aminoacyl-tRNA synthetase family. Zn(2+) serves as cofactor.

Its subcellular location is the cytoplasm. The enzyme catalyses tRNA(Ala) + L-alanine + ATP = L-alanyl-tRNA(Ala) + AMP + diphosphate. In terms of biological role, catalyzes the attachment of alanine to tRNA(Ala) in a two-step reaction: alanine is first activated by ATP to form Ala-AMP and then transferred to the acceptor end of tRNA(Ala). Also edits incorrectly charged Ser-tRNA(Ala) and Gly-tRNA(Ala) via its editing domain. The polypeptide is Alanine--tRNA ligase (Synechococcus sp. (strain JA-3-3Ab) (Cyanobacteria bacterium Yellowstone A-Prime)).